A 433-amino-acid polypeptide reads, in one-letter code: Glutamyl-tRNA reductase (433 aa).

Residues 49-52, Ser114, 119-121, and Gln125 each bind substrate; these read TCNR and EPQ. The active-site Nucleophile is the Cys50. Residue 201–206 participates in NADP(+) binding; sequence GAGETI.

This sequence belongs to the glutamyl-tRNA reductase family. As to quaternary structure, homodimer.

It catalyses the reaction (S)-4-amino-5-oxopentanoate + tRNA(Glu) + NADP(+) = L-glutamyl-tRNA(Glu) + NADPH + H(+). It functions in the pathway porphyrin-containing compound metabolism; protoporphyrin-IX biosynthesis; 5-aminolevulinate from L-glutamyl-tRNA(Glu): step 1/2. Functionally, catalyzes the NADPH-dependent reduction of glutamyl-tRNA(Glu) to glutamate 1-semialdehyde (GSA). This chain is Glutamyl-tRNA reductase, found in Histophilus somni (strain 2336) (Haemophilus somnus).